The chain runs to 718 residues: Polyphosphate kinase (718 aa).

Asn-47 is a binding site for ATP. Mg(2+) is bound by residues Arg-372 and Arg-402. The Phosphohistidine intermediate role is filled by His-432. Residues Tyr-465, Arg-561, and His-589 each contribute to the ATP site. A disordered region spans residues 683 to 718; sequence KADHGDTTPTSNAHQFIPMMSPKNEPDASDLDREDD. Residues 709–718 are compositionally biased toward acidic residues; that stretch reads DASDLDREDD.

This sequence belongs to the polyphosphate kinase 1 (PPK1) family. Mg(2+) serves as cofactor. Post-translationally, an intermediate of this reaction is the autophosphorylated ppk in which a phosphate is covalently linked to a histidine residue through a N-P bond.

It carries out the reaction [phosphate](n) + ATP = [phosphate](n+1) + ADP. Functionally, catalyzes the reversible transfer of the terminal phosphate of ATP to form a long-chain polyphosphate (polyP). This Lactiplantibacillus plantarum (strain ATCC BAA-793 / NCIMB 8826 / WCFS1) (Lactobacillus plantarum) protein is Polyphosphate kinase.